The sequence spans 946 residues: Protocadherin alpha-10 (946 aa).

The first 30 residues, 1–30, serve as a signal peptide directing secretion; sequence MSCVAMKYCHESWCLLLSLLLFAIWEPGSG. Cadherin domains follow at residues 31–134, 135–243, 244–351, 352–456, 457–566, and 582–679; these read QLRY…PPVF, PTTE…APAF, DRAI…APKI, IVTS…APAF, AQSE…APTL, and VPRS…APKA. The Extracellular segment spans residues 31–697; that stretch reads QLRYSVPEEA…ASESSVVDVN (667 aa). N258 is a glycosylation site (N-linked (GlcNAc...) asparagine). N549 is a glycosylation site (N-linked (GlcNAc...) asparagine). Residues 698 to 718 form a helical membrane-spanning segment; it reads VYLIIAICAVSSLLVLTLVLY. Topologically, residues 719-946 are cytoplasmic; sequence TALRCSALPT…GNSTTDNSDQ (228 aa). 6 PXXP repeats span residues 734-737, 774-777, 795-798, 828-831, 869-872, and 887-890; these read PGKP, PSVP, PRQP, PGGP, PGNP, and PGSP. The segment at 734–890 is 6 X 4 AA repeats of P-X-X-P; the sequence is PGKPMLVCSS…PDKFIIPGSP (157 aa). Disordered stretches follow at residues 826–852 and 865–946; these read AGPG…EVSP and FKYG…NSDQ. The segment covering 905–919 has biased composition (basic and acidic residues); sequence DKSDFITFGKKEETK.

It is found in the cell membrane. Potential calcium-dependent cell-adhesion protein. May be involved in the establishment and maintenance of specific neuronal connections in the brain. In Mus musculus (Mouse), this protein is Protocadherin alpha-10.